The chain runs to 384 residues: S-adenosylmethionine synthase (384 aa).

His-15 is an ATP binding site. Asp-17 contributes to the Mg(2+) binding site. Position 43 (Glu-43) interacts with K(+). Glu-56 and Gln-99 together coordinate L-methionine. The flexible loop stretch occupies residues 99–109 (QSPDINQGVDK). ATP is bound by residues 164–166 (DAK), 230–231 (RF), Asp-239, 245–246 (RK), Ala-262, and Lys-266. Asp-239 is an L-methionine binding site. Lys-270 contributes to the L-methionine binding site.

This sequence belongs to the AdoMet synthase family. Homotetramer; dimer of dimers. Mg(2+) serves as cofactor. Requires K(+) as cofactor.

The protein resides in the cytoplasm. It catalyses the reaction L-methionine + ATP + H2O = S-adenosyl-L-methionine + phosphate + diphosphate. Its pathway is amino-acid biosynthesis; S-adenosyl-L-methionine biosynthesis; S-adenosyl-L-methionine from L-methionine: step 1/1. In terms of biological role, catalyzes the formation of S-adenosylmethionine (AdoMet) from methionine and ATP. The overall synthetic reaction is composed of two sequential steps, AdoMet formation and the subsequent tripolyphosphate hydrolysis which occurs prior to release of AdoMet from the enzyme. In Vibrio parahaemolyticus serotype O3:K6 (strain RIMD 2210633), this protein is S-adenosylmethionine synthase.